The chain runs to 551 residues: Solute carrier family 22 member 4 (551 aa).

The Cytoplasmic segment spans residues 1-20 (MRDYDEAIAFLGEWGPFQRL). Residues 21 to 41 (IFFLLSASIIPNGFNGMSVVF) traverse the membrane as a helical segment. Residues 42 to 141 (LAGTPEHRCR…WNLVCEDNWK (100 aa)) are Extracellular-facing. Residues Asn57, Asn64, and Asn91 are each glycosylated (N-linked (GlcNAc...) asparagine). Residues 142 to 162 (VPLTTSLFFVGVLLGSFVSGQ) traverse the membrane as a helical segment. The Cytoplasmic portion of the chain corresponds to 163–171 (LSDRFGRKN). Residues 172–192 (VLFATMAVQTGFSFLQIFSIS) traverse the membrane as a helical segment. The Extracellular portion of the chain corresponds to 193 to 197 (WEMFT). Residues 198–218 (VLFLIVGMGQISNYVVAFILG) form a helical membrane-spanning segment. Position 218-225 (218-225 (GTEILGKS)) interacts with ATP. At 219–232 (TEILGKSVRIIFST) the chain is on the cytoplasmic side. The chain crosses the membrane as a helical span at residues 233–253 (LGVCTFFAVGYMLLPLFAYFI). Topologically, residues 254–257 (RDWR) are extracellular. Residues 258-278 (MLLLALTVPGVLCVPLWWFIP) form a helical membrane-spanning segment. At 279 to 337 (ESPRWLISQRRFREAEDIIQKAAKMNNIAVPAVIFDSVEELNPLKQQKAFILDLFRTWN) the chain is on the cytoplasmic side. The helical transmembrane segment at 338–358 (IAIMTIMSLLLWMLTSVGYFA) threads the bilayer. Residues 359–371 (LSLDTPNLHGDAY) lie on the Extracellular side of the membrane. Residues 372-392 (LNCFLSALIEIPAYITAWLLL) form a helical membrane-spanning segment. Over 393–399 (RTLPRRY) the chain is Cytoplasmic. Residues 400 to 420 (IIAAVLFWGGGVLLFIQLVPV) traverse the membrane as a helical segment. The Extracellular segment spans residues 421–426 (DYYFLS). A helical transmembrane segment spans residues 427-447 (IGLVMLGKFGITSAFSMLYVF). Residues 448–460 (TAELYPTMVRNMA) lie on the Cytoplasmic side of the membrane. A helical membrane pass occupies residues 461–481 (VGVTSMASRVGSIIAPYFVYL). Residues 482–486 (GAYNR) lie on the Extracellular side of the membrane. Residues 487 to 507 (MLPYIVMGSLTVLIGILTLFF) form a helical membrane-spanning segment. Residues 508 to 551 (PESLGMTLPETLEQMQKVKWFRSGKKTRDSMETEENPKVLITAF) are Cytoplasmic-facing.

The protein belongs to the major facilitator (TC 2.A.1) superfamily. Organic cation transporter (TC 2.A.1.19) family. Interacts with PDZK1.

The protein resides in the apical cell membrane. It localises to the basal cell membrane. Its subcellular location is the mitochondrion membrane. The catalysed reaction is ergothioneine(out) + Na(+)(out) = ergothioneine(in) + Na(+)(in). It carries out the reaction acetylcholine(in) = acetylcholine(out). It catalyses the reaction (R)-carnitine(out) + Na(+)(out) = (R)-carnitine(in) + Na(+)(in). The enzyme catalyses glycine betaine(out) + Na(+)(out) = glycine betaine(in) + Na(+)(in). Allosterically activated by intracellular ATP. In terms of biological role, transporter that mediates the transport of endogenous and microbial zwitterions and organic cations. Functions as a Na(+)-dependent and pH-dependent high affinity microbial symporter of potent food-derived antioxidant ergothioeine. Transports one sodium ion with one ergothioeine molecule. Involved in the absorption of ergothioneine from the luminal/apical side of the small intestine and renal tubular cells, and into non-parenchymal liver cells, thereby contributing to maintain steady-state ergothioneine level in the body. Also mediates the bidirectional transport of acetycholine, although the exact transport mechanism has not been fully identified yet. Most likely exports anti-inflammatory acetylcholine in non-neuronal tissues, thereby contributing to the non-neuronal cholinergic system. Displays a general physiological role linked to better survival by controlling inflammation and oxidative stress, which may be related to ergothioneine and acetycholine transports. May also function as a low-affinity Na(+)-dependent transporter of L-carnitine through the mitochondrial membrane, thereby maintaining intracellular carnitine homeostasis. May contribute to regulate the transport of cationic compounds in testis across the blood-testis-barrier. This Papio anubis (Olive baboon) protein is Solute carrier family 22 member 4 (SLC22A4).